The chain runs to 348 residues: Anthranilate phosphoribosyltransferase (348 aa).

5-phospho-alpha-D-ribose 1-diphosphate-binding positions include Gly-87, 90–91 (GD), Thr-95, 97–100 (NIST), 115–123 (KHGNRSASG), and Ser-127. Gly-87 is a binding site for anthranilate. Ser-99 serves as a coordination point for Mg(2+). Asn-118 serves as a coordination point for anthranilate. Arg-173 contacts anthranilate. Residues Asp-232 and Glu-233 each coordinate Mg(2+).

This sequence belongs to the anthranilate phosphoribosyltransferase family. In terms of assembly, homodimer. The cofactor is Mg(2+).

It catalyses the reaction N-(5-phospho-beta-D-ribosyl)anthranilate + diphosphate = 5-phospho-alpha-D-ribose 1-diphosphate + anthranilate. It functions in the pathway amino-acid biosynthesis; L-tryptophan biosynthesis; L-tryptophan from chorismate: step 2/5. In terms of biological role, catalyzes the transfer of the phosphoribosyl group of 5-phosphorylribose-1-pyrophosphate (PRPP) to anthranilate to yield N-(5'-phosphoribosyl)-anthranilate (PRA). This Synechococcus sp. (strain WH7803) protein is Anthranilate phosphoribosyltransferase.